Reading from the N-terminus, the 69-residue chain is UPF0270 protein VCM66_2532 (69 aa).

The protein belongs to the UPF0270 family.

This is UPF0270 protein VCM66_2532 from Vibrio cholerae serotype O1 (strain M66-2).